Reading from the N-terminus, the 347-residue chain is HTH-type transcriptional regulator PhcA (347 aa).

The region spanning 1-61 (MVNVDTKLLV…IRVPHGLTPT (61 aa)) is the HTH lysR-type domain. The H-T-H motif DNA-binding region spans 21-40 (ATYVAEKMHMTAPAVSHSLG). The tract at residues 316-347 (PMHPPMLTDDSGKSGKTGKGDAEKEDESRLSV) is disordered. Residues 325–347 (DSGKSGKTGKGDAEKEDESRLSV) are compositionally biased toward basic and acidic residues.

It belongs to the LysR transcriptional regulatory family.

Its function is as follows. Regulates the transcription of one or more of the genes involved in virulence. The chain is HTH-type transcriptional regulator PhcA (phcA) from Ralstonia nicotianae (strain ATCC BAA-1114 / GMI1000) (Ralstonia solanacearum).